Here is a 48-residue protein sequence, read N- to C-terminus: Small, acid-soluble spore protein P (48 aa).

The segment covering M1–Q19 has biased composition (basic and acidic residues). The interval M1 to M48 is disordered. Residues K30 to M48 show a composition bias toward basic residues.

The protein belongs to the SspP family.

Its subcellular location is the spore core. The chain is Small, acid-soluble spore protein P from Bacillus pumilus (strain SAFR-032).